The sequence spans 269 residues: Formamidopyrimidine-DNA glycosylase (269 aa).

P2 functions as the Schiff-base intermediate with DNA in the catalytic mechanism. E3 functions as the Proton donor in the catalytic mechanism. Catalysis depends on K57, which acts as the Proton donor; for beta-elimination activity. The DNA site is built by H90, R109, and K150. The segment at 235–269 (RVYGRNGEPCRTCGTPIETAKHGQRSTFFCRRCQV) adopts an FPG-type zinc-finger fold. R259 (proton donor; for delta-elimination activity) is an active-site residue.

This sequence belongs to the FPG family. Monomer. It depends on Zn(2+) as a cofactor.

It catalyses the reaction Hydrolysis of DNA containing ring-opened 7-methylguanine residues, releasing 2,6-diamino-4-hydroxy-5-(N-methyl)formamidopyrimidine.. The catalysed reaction is 2'-deoxyribonucleotide-(2'-deoxyribose 5'-phosphate)-2'-deoxyribonucleotide-DNA = a 3'-end 2'-deoxyribonucleotide-(2,3-dehydro-2,3-deoxyribose 5'-phosphate)-DNA + a 5'-end 5'-phospho-2'-deoxyribonucleoside-DNA + H(+). Involved in base excision repair of DNA damaged by oxidation or by mutagenic agents. Acts as a DNA glycosylase that recognizes and removes damaged bases. Has a preference for oxidized purines, such as 7,8-dihydro-8-oxoguanine (8-oxoG). Has AP (apurinic/apyrimidinic) lyase activity and introduces nicks in the DNA strand. Cleaves the DNA backbone by beta-delta elimination to generate a single-strand break at the site of the removed base with both 3'- and 5'-phosphates. In Pectobacterium atrosepticum (strain SCRI 1043 / ATCC BAA-672) (Erwinia carotovora subsp. atroseptica), this protein is Formamidopyrimidine-DNA glycosylase.